A 253-amino-acid polypeptide reads, in one-letter code: Mediator of RNA polymerase II transcription subunit 10 (253 aa).

Disordered regions lie at residues 32-63, 88-109, and 206-253; these read YDTNPSSSNNNTPTSSRASGGGGGGGGGHASS, LPSSPSSGPSNNQPQQGTTELE, and VEAT…QSGQ. Positions 34–47 are enriched in low complexity; the sequence is TNPSSSNNNTPTSS. The segment covering 50–60 has biased composition (gly residues); that stretch reads SGGGGGGGGGH. A compositionally biased stretch (low complexity) spans 88 to 104; the sequence is LPSSPSSGPSNNQPQQG. The span at 231–253 shows a compositional bias: gly residues; it reads SAGGEGQQGQGQGQQGQGQQSGQ.

The protein belongs to the Mediator complex subunit 10 family. Component of the Mediator complex.

The protein localises to the nucleus. Component of the Mediator complex, a coactivator involved in the regulated transcription of nearly all RNA polymerase II-dependent genes. Mediator functions as a bridge to convey information from gene-specific regulatory proteins to the basal RNA polymerase II transcription machinery. Mediator is recruited to promoters by direct interactions with regulatory proteins and serves as a scaffold for the assembly of a functional preinitiation complex with RNA polymerase II and the general transcription factors. The sequence is that of Mediator of RNA polymerase II transcription subunit 10 (nut2) from Neurospora crassa (strain ATCC 24698 / 74-OR23-1A / CBS 708.71 / DSM 1257 / FGSC 987).